Reading from the N-terminus, the 129-residue chain is Glycine cleavage system H protein (129 aa).

The Lipoyl-binding domain occupies 24-106; the sequence is IATIGISAFA…YGEGWLVKVR (83 aa). K65 bears the N6-lipoyllysine mark.

It belongs to the GcvH family. The glycine cleavage system is composed of four proteins: P, T, L and H. (R)-lipoate serves as cofactor.

Its function is as follows. The glycine cleavage system catalyzes the degradation of glycine. The H protein shuttles the methylamine group of glycine from the P protein to the T protein. The polypeptide is Glycine cleavage system H protein (Cyanothece sp. (strain PCC 7425 / ATCC 29141)).